Here is a 307-residue protein sequence, read N- to C-terminus: uncharacterized protein (307 aa).

This is an uncharacterized protein from Acidianus hospitalis (AFV-1).